Here is a 100-residue protein sequence, read N- to C-terminus: uncharacterized protein (100 aa).

It belongs to the mulikevirus gp14 protein family.

The protein resides in the host cytoplasm. This is an uncharacterized protein from Enterobacteriaceae (Bacteriophage Mu).